Reading from the N-terminus, the 306-residue chain is Oxygen-dependent coproporphyrinogen-III oxidase (306 aa).

Ser-99 is a binding site for substrate. A divalent metal cation is bound by residues His-103 and His-113. His-113 serves as the catalytic Proton donor. Substrate is bound at residue 115–117; sequence NVR. The a divalent metal cation site is built by His-152 and His-182. The tract at residues 247-282 is important for dimerization; that stretch reads YVEFNLVFDRGTLFGLQSGGRTESILMSMPPVANWR. A substrate-binding site is contributed by 265–267; it reads GGR.

This sequence belongs to the aerobic coproporphyrinogen-III oxidase family. As to quaternary structure, homodimer. Requires a divalent metal cation as cofactor.

Its subcellular location is the cytoplasm. The enzyme catalyses coproporphyrinogen III + O2 + 2 H(+) = protoporphyrinogen IX + 2 CO2 + 2 H2O. It participates in porphyrin-containing compound metabolism; protoporphyrin-IX biosynthesis; protoporphyrinogen-IX from coproporphyrinogen-III (O2 route): step 1/1. Its function is as follows. Involved in the heme biosynthesis. Catalyzes the aerobic oxidative decarboxylation of propionate groups of rings A and B of coproporphyrinogen-III to yield the vinyl groups in protoporphyrinogen-IX. The chain is Oxygen-dependent coproporphyrinogen-III oxidase from Burkholderia ambifaria (strain MC40-6).